The sequence spans 132 residues: Small ribosomal subunit protein uS8 (132 aa).

Belongs to the universal ribosomal protein uS8 family. Part of the 30S ribosomal subunit. Contacts proteins S5 and S12.

In terms of biological role, one of the primary rRNA binding proteins, it binds directly to 16S rRNA central domain where it helps coordinate assembly of the platform of the 30S subunit. This is Small ribosomal subunit protein uS8 from Roseiflexus castenholzii (strain DSM 13941 / HLO8).